A 258-amino-acid chain; its full sequence is Small ribosomal subunit protein eS1 (258 aa).

The disordered stretch occupies residues V235–V258.

It belongs to the eukaryotic ribosomal protein eS1 family. In terms of assembly, component of the small ribosomal subunit. Mature ribosomes consist of a small (40S) and a large (60S) subunit. The 40S subunit contains about 33 different proteins and 1 molecule of RNA (18S). The 60S subunit contains about 49 different proteins and 3 molecules of RNA (28S, 5.8S and 5S).

The protein resides in the cytoplasm. In Trichoplax adhaerens (Trichoplax reptans), this protein is Small ribosomal subunit protein eS1.